Consider the following 318-residue polypeptide: Ribosomal RNA small subunit methyltransferase H (318 aa).

Residues 34 to 36, Asp-52, Phe-79, Asp-100, and Gln-107 contribute to the S-adenosyl-L-methionine site; that span reads GGY. A disordered region spans residues 286 to 318; the sequence is GPAPDEARANPRARSAKLRAAARTAAPAWETVS. Positions 303-318 are enriched in low complexity; that stretch reads LRAAARTAAPAWETVS.

Belongs to the methyltransferase superfamily. RsmH family.

It localises to the cytoplasm. The catalysed reaction is cytidine(1402) in 16S rRNA + S-adenosyl-L-methionine = N(4)-methylcytidine(1402) in 16S rRNA + S-adenosyl-L-homocysteine + H(+). Its function is as follows. Specifically methylates the N4 position of cytidine in position 1402 (C1402) of 16S rRNA. The chain is Ribosomal RNA small subunit methyltransferase H from Paramagnetospirillum magneticum (strain ATCC 700264 / AMB-1) (Magnetospirillum magneticum).